A 526-amino-acid chain; its full sequence is MSDNKVEVDKRRTFAIISHPDAGKTTITEKVLLFGNALQKAGTVKGKKSGQHAKSDWMEMEKDRGISITTSVMQFPYGGALVNLLDTPGHEDFSEDTYRTLTAVDSCLMVIDSAKGVEDRTIKLMEVTRLRDTPIVTFMNKLDRDIRDPIELMDEVEDVLNIACAPITWPIGSGKEFKGVYHILRDEVVLYQSGMGHTIQERRVIEGIDNPELDKAIGSYAADLRDEMELVRGASNEFDHQAFLKGELTPVFFGTALGNFGVDHILDGIVEWAPKPLPRESDARMIMPDEEKFTGFVFKIQANMDPKHRDRVAFMRVCSGRYEQGMKMHHVRIGKDVNVSDALTFMAGDRERAEVAYPGDIIGLHNHGTIRIGDTFTQGEKFRFTGVPNFAPEMFRRIRLRDPLKQKQLLKGLVQLSEEGAVQVFRPLDSNDLIVGAVGVLQFEVVVGRLKSEYNVEAIYEGISVSTARWVYCKDERKLEEFRRKCSQNLALDGGDNLTYIAPTMVNLNLSMERYPDIEFAKTREH.

The tr-type G domain maps to 9–277 (DKRRTFAIIS…GIVEWAPKPL (269 aa)). Residues 18 to 25 (SHPDAGKT), 86 to 90 (DTPGH), and 140 to 143 (NKLD) contribute to the GTP site.

The protein belongs to the TRAFAC class translation factor GTPase superfamily. Classic translation factor GTPase family. PrfC subfamily.

The protein localises to the cytoplasm. In terms of biological role, increases the formation of ribosomal termination complexes and stimulates activities of RF-1 and RF-2. It binds guanine nucleotides and has strong preference for UGA stop codons. It may interact directly with the ribosome. The stimulation of RF-1 and RF-2 is significantly reduced by GTP and GDP, but not by GMP. In Shewanella sp. (strain ANA-3), this protein is Peptide chain release factor 3.